The following is a 141-amino-acid chain: Hemoglobin subunit alpha-A (141 aa).

Residues 1–141 enclose the Globin domain; that stretch reads VLSASDKSNV…VGTVLTAKYR (141 aa). His-58 contributes to the O2 binding site. A heme b-binding site is contributed by His-87.

The protein belongs to the globin family. Heterotetramer of two alpha chains and two beta chains. As to expression, red blood cells.

In terms of biological role, involved in oxygen transport from the lung to the various peripheral tissues. This Streptopelia orientalis (Eastern turtle dove) protein is Hemoglobin subunit alpha-A (HBAA).